The sequence spans 228 residues: Urease accessory protein UreH (228 aa).

A run of 5 helical transmembrane segments spans residues 48 to 68 (VFWG…IILM), 79 to 99 (SLEF…ILSL), 130 to 150 (LFIG…LTMS), 162 to 182 (ILFF…LIGI), and 196 to 216 (AFIQ…MYNL).

Belongs to the NiCoT transporter (TC 2.A.52) family.

Its subcellular location is the cell membrane. In terms of biological role, probably facilitates nickel incorporation. May constitute a multicomponent high-affinity nickel transporter. Not essential for the expression of catalytically active urease. The chain is Urease accessory protein UreH (ureH) from Bacillus sp. (strain TB-90).